An 813-amino-acid polypeptide reads, in one-letter code: Calpain-7 (813 aa).

Position 1 is an N-acetylmethionine (Met-1). At Thr-95 the chain carries Phosphothreonine. One can recognise a Calpain catalytic domain in the interval 232–540 (RERFAYPMPF…YDVVYLSWNP (309 aa)). Catalysis depends on residues Cys-290, His-458, and Asn-478. Residues 541–701 (ALFKESTCIH…INGKWSGQSA (161 aa)) are domain III. Residues 702-813 (GGCGNFQETH…TVPIKTTQLQ (112 aa)) form a domain N region.

This sequence belongs to the peptidase C2 family. As to expression, ubiquitous.

The protein localises to the nucleus. In terms of biological role, calcium-regulated non-lysosomal thiol-protease. This is Calpain-7 (Capn7) from Mus musculus (Mouse).